The following is a 305-amino-acid chain: Oligopeptide transport ATP-binding protein OppF (305 aa).

One can recognise an ABC transporter domain in the interval 6 to 251; it reads LEIKHLKQHF…PLHPYTKSLL (246 aa). 42 to 49 is a binding site for ATP; sequence GESGCGKS.

Belongs to the ABC transporter superfamily. In terms of assembly, the complex is composed of two ATP-binding proteins (OppD and OppF), two transmembrane proteins (OppB and OppC) and a solute-binding protein (OppA).

The protein resides in the cell membrane. The enzyme catalyses a [peptide](out) + ATP + H2O = a [peptide](in) + ADP + phosphate + H(+). Part of the ABC transporter complex OppABCDF involved in the uptake of oligopeptides. Probably responsible for energy coupling to the transport system. Required for genetic competence but not for peptide transport or for sporulation. In Bacillus subtilis (strain 168), this protein is Oligopeptide transport ATP-binding protein OppF.